Consider the following 317-residue polypeptide: Retinol dehydrogenase 16 (317 aa).

Residue Phe-33–Leu-57 participates in NAD(+) binding. Tyr-176 functions as the Proton acceptor in the catalytic mechanism. The chain crosses the membrane as a helical span at residues Leu-289–Thr-309.

The protein belongs to the short-chain dehydrogenases/reductases (SDR) family. Homodimer. Post-translationally, not glycosylated.

The protein resides in the endoplasmic reticulum membrane. The protein localises to the microsome membrane. The enzyme catalyses all-trans-retinol--[retinol-binding protein] + NAD(+) = all-trans-retinal--[retinol-binding protein] + NADH + H(+). It catalyses the reaction 9-cis-retinol + NAD(+) = 9-cis-retinal + NADH + H(+). It carries out the reaction 11-cis-retinol + NAD(+) = 11-cis-retinal + NADH + H(+). The catalysed reaction is 13-cis-retinol + NAD(+) = 13-cis-retinal + NADH + H(+). The enzyme catalyses androsterone + NAD(+) = 5alpha-androstan-3,17-dione + NADH + H(+). It catalyses the reaction 5alpha-androstane-3alpha,17beta-diol + NAD(+) = 17beta-hydroxy-5alpha-androstan-3-one + NADH + H(+). Its pathway is cofactor metabolism; retinol metabolism. In terms of biological role, oxidoreductase with a preference for NAD. Oxidizes all-trans-retinol, 9-cis-retinol, 11-cis-retinol and 13-cis-retinol to the corresponding aldehydes. Has higher activity towards CRBP-bound retinol than with free retinol. Oxidizes 3-alpha-hydroxysteroids. Oxidizes androstanediol and androsterone to dihydrotestosterone and androstanedione. Can also catalyze the reverse reaction. In Mus musculus (Mouse), this protein is Retinol dehydrogenase 16.